The primary structure comprises 313 residues: Potassium channel subfamily K member 6 (313 aa).

Residues 1–4 (MRRG) are Cytoplasmic-facing. Residues 5-25 (ALLASALAAYAGYLALGALLV) traverse the membrane as a helical segment. N-linked (GlcNAc...) asparagine glycans are attached at residues Asn-79 and Asn-85. Positions 90–115 (AWDFASALFFASTLVTTVGYGYTTPL) form an intramembrane region, pore-forming. Positions 106, 107, 108, and 109 each coordinate K(+). The selectivity filter 1 stretch occupies residues 106–111 (TVGYGY). The chain crosses the membrane as a helical span at residues 121–141 (AFSIVFALLGVPITMLLLTAS). Topologically, residues 142-172 (AQRLSLLLTHAPLSWLSLHWGWPPQRAARWH) are cytoplasmic. A helical membrane pass occupies residues 173–193 (LVALLMVIVAIFFLVPAAVFA). Residues 199 to 223 (WSFLDAFYFCFISLSTIGLGDYVPG) constitute an intramembrane region (pore-forming). The K(+) site is built by Thr-214, Ile-215, and Gly-216. Residues 214–219 (TIGLGD) form a selectivity filter 2 region. Residues 236-256 (VLVTAYLFLGLVAMVLVLQTF) traverse the membrane as a helical segment. Residues 257–313 (RRVSDLHGLTELILLPDPDPASLSQDEDDQVAVLDARTDLHQHLSAASHADYASIPR) lie on the Cytoplasmic side of the membrane. Short sequence motifs (lysosomal targeting signal) lie at residues 282–290 (DEDDQVAVL) and 308–312 (YASIP).

The protein belongs to the two pore domain potassium channel (TC 1.A.1.8) family. As to quaternary structure, homodimer; disulfide-linked. N-glycosylation is necessary for targeting to lysosomes.

The protein resides in the late endosome membrane. The protein localises to the lysosome membrane. The enzyme catalyses K(+)(in) = K(+)(out). K(+) channel that conducts outward rectifying currents at the membranes of the endolysosomal system. Active in lysosomes where it regulates lysosome numbers and size. In macrophages, enables K(+) efflux coupled to ATP-induced NLRP3 inflammasome activation upon bacterial infection. Cooperates with ATP-gated P2RX7 to activate NLRP3 inflammasome, with P2RX7 conducting Ca(2+) and Na(+) influx that sets the membrane potential for K(+) efflux. The protein is Potassium channel subfamily K member 6 of Mus musculus (Mouse).